The primary structure comprises 449 residues: Endoglucanase A (449 aa).

The tat-type signal signal peptide spans 1–31 (MSTRRTAAALLAAAAVAVGGLTALTTTAAQA). The CBM2 domain maps to 32 to 137 (APGCRVDYAV…SLNGTTCTGT (106 aa)). Cysteines 35 and 134 form a disulfide. Residues 127–170 (FSLNGTTCTGTVPTTSPTPTPTPTTPTPTPTPTPTPTPTVTPQP) form a disordered region. Low complexity predominate over residues 132-141 (TTCTGTVPTT). The linker ('hinge') (Pro-Thr box) stretch occupies residues 139-168 (PTTSPTPTPTPTTPTPTPTPTPTPTPTVTP). Pro residues predominate over residues 142 to 167 (SPTPTPTPTTPTPTPTPTPTPTPTVT). Aspartate 247 is an active-site residue. Intrachain disulfides connect cysteine 248-cysteine 291 and cysteine 390-cysteine 426. The active-site Proton donor is the aspartate 283. Aspartate 423 functions as the Nucleophile in the catalytic mechanism. The interval 438 to 449 (EIALEMARNARW) is catalytic.

The protein belongs to the glycosyl hydrolase 6 (cellulase B) family. The linker region (also termed 'hinge') may be a potential site for proteolysis. Post-translationally, predicted to be exported by the Tat system. The position of the signal peptide cleavage has not been experimentally proven.

It carries out the reaction Endohydrolysis of (1-&gt;4)-beta-D-glucosidic linkages in cellulose, lichenin and cereal beta-D-glucans.. Functionally, the biological conversion of cellulose to glucose generally requires three types of hydrolytic enzymes: (1) Endoglucanases which cut internal beta-1,4-glucosidic bonds; (2) Exocellobiohydrolases that cut the disaccharide cellobiose from the non-reducing end of the cellulose polymer chain; (3) Beta-1,4-glucosidases which hydrolyze the cellobiose and other short cello-oligosaccharides to glucose. This is Endoglucanase A (cenA) from Cellulomonas fimi.